The sequence spans 414 residues: Tyrosine--tRNA ligase (414 aa).

Residue Tyr40 participates in L-tyrosine binding. The 'HIGH' region signature appears at 45-54; the sequence is ATAASLHVGH. L-tyrosine is bound by residues Tyr175 and Gln179. A 'KMSKS' region motif is present at residues 235–239; sequence KMGKS. An ATP-binding site is contributed by Lys238. The S4 RNA-binding domain occupies 349-414; it reads LTVVQLLAQT…KKKHRMVQLG (66 aa).

It belongs to the class-I aminoacyl-tRNA synthetase family. TyrS type 1 subfamily. As to quaternary structure, homodimer.

It is found in the cytoplasm. It carries out the reaction tRNA(Tyr) + L-tyrosine + ATP = L-tyrosyl-tRNA(Tyr) + AMP + diphosphate + H(+). In terms of biological role, catalyzes the attachment of tyrosine to tRNA(Tyr) in a two-step reaction: tyrosine is first activated by ATP to form Tyr-AMP and then transferred to the acceptor end of tRNA(Tyr). This chain is Tyrosine--tRNA ligase, found in Paracoccus denitrificans (strain Pd 1222).